Here is an 82-residue protein sequence, read N- to C-terminus: Small ribosomal subunit protein uS17c (82 aa).

Belongs to the universal ribosomal protein uS17 family. As to quaternary structure, part of the 30S ribosomal subunit.

The protein resides in the plastid. It is found in the chloroplast. In terms of biological role, one of the primary rRNA binding proteins, it binds specifically to the 5'-end of 16S ribosomal RNA. This chain is Small ribosomal subunit protein uS17c (rps17), found in Emiliania huxleyi (Coccolithophore).